Here is a 302-residue protein sequence, read N- to C-terminus: Protein FdhE homolog (302 aa).

Belongs to the FdhE family.

The protein localises to the cytoplasm. In terms of biological role, necessary for formate dehydrogenase activity. In Shewanella oneidensis (strain ATCC 700550 / JCM 31522 / CIP 106686 / LMG 19005 / NCIMB 14063 / MR-1), this protein is Protein FdhE homolog.